A 1134-amino-acid chain; its full sequence is TBC1 domain family member 8 (1134 aa).

2 GRAM domains span residues 145-212 and 285-353; these read VKFE…ERTS and EFFR…EKME. A disordered region spans residues 433-466; it reads ASQSSEEREEKRPLPHPEPLTAVFQQSGSQSPDS. The segment covering 437 to 447 has biased composition (basic and acidic residues); it reads SEEREEKRPLP. Residues 455-466 are compositionally biased toward polar residues; sequence VFQQSGSQSPDS. The region spanning 504–691 is the Rab-GAP TBC domain; sequence GIPESLRGRL…HVVDCFFYDG (188 aa). Residues 1034–1070 are disordered; that stretch reads SSSGSCSQECEEPQASAPPEQDSVFAEAGKSPQAFPE.

In terms of biological role, may act as a GTPase-activating protein for Rab family protein(s). The polypeptide is TBC1 domain family member 8 (Tbc1d8) (Mus musculus (Mouse)).